The following is a 101-amino-acid chain: Large ribosomal subunit protein bL21 (101 aa).

Belongs to the bacterial ribosomal protein bL21 family. As to quaternary structure, part of the 50S ribosomal subunit. Contacts protein L20.

Its function is as follows. This protein binds to 23S rRNA in the presence of protein L20. The polypeptide is Large ribosomal subunit protein bL21 (Thermus thermophilus (strain ATCC BAA-163 / DSM 7039 / HB27)).